We begin with the raw amino-acid sequence, 299 residues long: ATP phosphoribosyltransferase (299 aa).

It belongs to the ATP phosphoribosyltransferase family. Long subfamily. Mg(2+) serves as cofactor.

The protein localises to the cytoplasm. The enzyme catalyses 1-(5-phospho-beta-D-ribosyl)-ATP + diphosphate = 5-phospho-alpha-D-ribose 1-diphosphate + ATP. It participates in amino-acid biosynthesis; L-histidine biosynthesis; L-histidine from 5-phospho-alpha-D-ribose 1-diphosphate: step 1/9. Feedback inhibited by histidine. Catalyzes the condensation of ATP and 5-phosphoribose 1-diphosphate to form N'-(5'-phosphoribosyl)-ATP (PR-ATP). Has a crucial role in the pathway because the rate of histidine biosynthesis seems to be controlled primarily by regulation of HisG enzymatic activity. This chain is ATP phosphoribosyltransferase, found in Shewanella loihica (strain ATCC BAA-1088 / PV-4).